Reading from the N-terminus, the 307-residue chain is Homoserine kinase (307 aa).

Residue 95–105 (PQSRGLGSSAS) coordinates ATP.

The protein belongs to the GHMP kinase family. Homoserine kinase subfamily.

It is found in the cytoplasm. It carries out the reaction L-homoserine + ATP = O-phospho-L-homoserine + ADP + H(+). The protein operates within amino-acid biosynthesis; L-threonine biosynthesis; L-threonine from L-aspartate: step 4/5. Its function is as follows. Catalyzes the ATP-dependent phosphorylation of L-homoserine to L-homoserine phosphate. This is Homoserine kinase from Corynebacterium aurimucosum (strain ATCC 700975 / DSM 44827 / CIP 107346 / CN-1) (Corynebacterium nigricans).